We begin with the raw amino-acid sequence, 484 residues long: Calcium uniporter protein, mitochondrial (484 aa).

A mitochondrion-targeting transit peptide spans 1–33 (MGHVLGGTLLAANRLARPPAVVLGKPRVCCWRA). The Mitochondrial matrix portion of the chain corresponds to 34–304 (SPWPVIVSSA…CDLLAHKGAH (271 aa)). 2 disordered regions span residues 59–104 (ARYE…KGRL) and 188–227 (YTGG…DTHW). The span at 61–82 (YEARGRSTTQRKVDDRPWHRES) shows a compositional bias: basic and acidic residues. The span at 83 to 93 (SGSLPKSTSPD) shows a compositional bias: polar residues. A helical membrane pass occupies residues 305 to 326 (ALAKGGFAALAAWWGIVYYVTF). Over 327-334 (HTDMGWDL) the chain is Mitochondrial intermembrane. Positions 332 to 340 (WDLVEPITY) match the Selectivity filter motif. A helical membrane pass occupies residues 335–355 (VEPITYLAGLASIMGGYLWFL). Residue Glu-336 coordinates Ca(2+). The Mitochondrial matrix portion of the chain corresponds to 356–484 (FISRDLSYKA…NEAAANVPGD (129 aa)). 2 stretches are compositionally biased toward basic and acidic residues: residues 426–435 (KEVLEEEKGG) and 452–462 (DHDHDHDHVSH). The interval 426-484 (KEVLEEEKGGKARKREQEDEDGDGDDDHDHDHDHVSHGAELQGQDILHANEAAANVPGD) is disordered.

It belongs to the MCU (TC 1.A.77) family. Homotetramer, assembles in a dimer or dimers configuration with two interfaces.

The protein resides in the mitochondrion inner membrane. It catalyses the reaction Ca(2+)(in) = Ca(2+)(out). With respect to regulation, inhibited by ruthenium red or its derivative Ru360. Highly selective calcium channel localized to the inner mitochondrial membrane, which mediates calcium uptake into the mitochondrial matrix. Mitochondrial calcium homeostasis plays key roles in cellular physiology and regulates ATP production, cytoplasmic calcium signals and activation of cell death pathways. Sufficient to operate as a pore-forming channel without the need of calcium-sensor or auxiliary subunit. This chain is Calcium uniporter protein, mitochondrial, found in Metarhizium acridum (strain CQMa 102).